Here is a 241-residue protein sequence, read N- to C-terminus: MKKNLTFFMVIALLFTITPNVYAMHIAEGFLPPMWSGVYFVISAPFIIIGLKQIRERAKDNKDIKMLLGLVAAYAFILSAMKIPSVTGSCSHPTGTGLSAIIFGPFISAIVGLIVLIFQAILLAHGGITTLGANTLSMGIMGPIVSYLIYRGFKNKNQKVAVFLAATLGDLFTYFITSVQLALAFPAQQGGIAASFAKFFSIFSITQIPLAIMEGILTVIIFEFVMKYASKEIEVLGGVRK.

Positions 1–23 are cleaved as a signal peptide; it reads MKKNLTFFMVIALLFTITPNVYA. 6 helical membrane-spanning segments follow: residues 29-49, 66-86, 98-118, 121-141, 160-180, and 202-222; these read GFLP…FIII, MLLG…IPSV, LSAI…VLIF, ILLA…MGIM, VAVF…TSVQ, and IFSI…VIIF.

This sequence belongs to the CbiM family. In terms of assembly, forms an energy-coupling factor (ECF) transporter complex composed of an ATP-binding protein (A component, CbiO), a transmembrane protein (T component, CbiQ) and 2 possible substrate-capture proteins (S components, CbiM and CbiN) of unknown stoichimetry.

The protein resides in the cell membrane. Its pathway is cofactor biosynthesis; adenosylcobalamin biosynthesis. In terms of biological role, part of the energy-coupling factor (ECF) transporter complex CbiMNOQ involved in cobalt import. This chain is Cobalt transport protein CbiM, found in Clostridium tetani (strain Massachusetts / E88).